The following is a 130-amino-acid chain: Small ribosomal subunit protein uS9 (130 aa).

The protein belongs to the universal ribosomal protein uS9 family.

This is Small ribosomal subunit protein uS9 from Pseudoalteromonas atlantica (strain T6c / ATCC BAA-1087).